The chain runs to 413 residues: Arginine biosynthesis bifunctional protein ArgJ, mitochondrial (413 aa).

The substrate site is built by T168, K194, T205, and E292. Residue T205 is the Nucleophile of the active site.

It belongs to the ArgJ family. In terms of assembly, heterodimer of an alpha and a beta chain. Post-translationally, the alpha and beta chains are autoproteolytically processed from a single precursor protein within the mitochondrion.

It is found in the mitochondrion matrix. It catalyses the reaction N(2)-acetyl-L-ornithine + L-glutamate = N-acetyl-L-glutamate + L-ornithine. The catalysed reaction is L-glutamate + acetyl-CoA = N-acetyl-L-glutamate + CoA + H(+). It functions in the pathway amino-acid biosynthesis; L-arginine biosynthesis; L-ornithine and N-acetyl-L-glutamate from L-glutamate and N(2)-acetyl-L-ornithine (cyclic): step 1/1. It participates in amino-acid biosynthesis; L-arginine biosynthesis; N(2)-acetyl-L-ornithine from L-glutamate: step 1/4. In terms of biological role, catalyzes two activities which are involved in the cyclic version of arginine biosynthesis: the synthesis of acetylglutamate from glutamate and acetyl-CoA, and of ornithine by transacetylation between acetylornithine and glutamate. This Clavispora lusitaniae (strain ATCC 42720) (Yeast) protein is Arginine biosynthesis bifunctional protein ArgJ, mitochondrial.